Reading from the N-terminus, the 159-residue chain is RNA pyrophosphohydrolase (159 aa).

The Nudix hydrolase domain maps to 6 to 149; sequence GFRPNVGIIL…KREVYRRALK (144 aa). The Nudix box motif lies at 38 to 59; it reads GGINPDETPEDALYRELNEEVG.

Belongs to the Nudix hydrolase family. RppH subfamily. It depends on a divalent metal cation as a cofactor.

Functionally, accelerates the degradation of transcripts by removing pyrophosphate from the 5'-end of triphosphorylated RNA, leading to a more labile monophosphorylated state that can stimulate subsequent ribonuclease cleavage. The polypeptide is RNA pyrophosphohydrolase (Pseudomonas fluorescens (strain SBW25)).